The primary structure comprises 1029 residues: 2-oxoglutarate dehydrogenase, mitochondrial (1029 aa).

R317, D415, N448, I450, and Q676 together coordinate thiamine diphosphate. Residues D415, N448, and I450 each coordinate Mg(2+).

This sequence belongs to the alpha-ketoglutarate dehydrogenase family. Homodimer. Component of the 2-oxoglutarate dehydrogenase complex. Thiamine diphosphate serves as cofactor. Mg(2+) is required as a cofactor.

Its subcellular location is the mitochondrion matrix. It catalyses the reaction N(6)-[(R)-lipoyl]-L-lysyl-[protein] + 2-oxoglutarate + H(+) = N(6)-[(R)-S(8)-succinyldihydrolipoyl]-L-lysyl-[protein] + CO2. In terms of biological role, the 2-oxoglutarate dehydrogenase complex catalyzes the overall conversion of 2-oxoglutarate to succinyl-CoA and CO(2). It contains multiple copies of three enzymatic components: 2-oxoglutarate dehydrogenase (E1), dihydrolipoamide succinyltransferase (E2) and lipoamide dehydrogenase (E3). This chain is 2-oxoglutarate dehydrogenase, mitochondrial (ogdh-1), found in Caenorhabditis elegans.